The following is a 296-amino-acid chain: Phosphatidylglycerol--prolipoprotein diacylglyceryl transferase (296 aa).

7 helical membrane-spanning segments follow: residues 17–37 (LAVR…IVVG), 59–79 (MMFY…VLFY), 97–117 (GGMS…LFAW), 129–149 (FVAP…FING), 204–224 (SQLY…FLFA), 230–250 (MGAI…TVEF), and 257–277 (FLGL…PMIL). A 1,2-diacyl-sn-glycero-3-phospho-(1'-sn-glycerol) is bound at residue arginine 142.

The protein belongs to the Lgt family.

The protein resides in the cell inner membrane. The enzyme catalyses L-cysteinyl-[prolipoprotein] + a 1,2-diacyl-sn-glycero-3-phospho-(1'-sn-glycerol) = an S-1,2-diacyl-sn-glyceryl-L-cysteinyl-[prolipoprotein] + sn-glycerol 1-phosphate + H(+). Its pathway is protein modification; lipoprotein biosynthesis (diacylglyceryl transfer). Catalyzes the transfer of the diacylglyceryl group from phosphatidylglycerol to the sulfhydryl group of the N-terminal cysteine of a prolipoprotein, the first step in the formation of mature lipoproteins. This is Phosphatidylglycerol--prolipoprotein diacylglyceryl transferase from Burkholderia cenocepacia (strain HI2424).